The following is a 390-amino-acid chain: GTPase Obg (390 aa).

One can recognise an Obg domain in the interval 1-159 (MKFVDEAVIR…RHLRLELLLL (159 aa)). Residues 22-42 (SFRTEKYVPRGGPDGGDGGDG) are disordered. The span at 33–42 (GPDGGDGGDG) shows a compositional bias: gly residues. One can recognise an OBG-type G domain in the interval 160-333 (ADVGMLGLPN…LTYNLMTTIE (174 aa)). GTP-binding positions include 166–173 (GLPNAGKS), 191–195 (FTTLI), 213–216 (DIPG), 283–286 (NKVD), and 314–316 (SAL). Positions 173 and 193 each coordinate Mg(2+).

This sequence belongs to the TRAFAC class OBG-HflX-like GTPase superfamily. OBG GTPase family. In terms of assembly, monomer. It depends on Mg(2+) as a cofactor.

It is found in the cytoplasm. Its function is as follows. An essential GTPase which binds GTP, GDP and possibly (p)ppGpp with moderate affinity, with high nucleotide exchange rates and a fairly low GTP hydrolysis rate. Plays a role in control of the cell cycle, stress response, ribosome biogenesis and in those bacteria that undergo differentiation, in morphogenesis control. This Photobacterium profundum (strain SS9) protein is GTPase Obg.